The primary structure comprises 322 residues: Ferredoxin--NADP reductase (322 aa).

Residues Ser14, Asp33, Gln41, Tyr46, Ala86, Phe120, Asp278, and Ser319 each contribute to the FAD site.

It belongs to the ferredoxin--NADP reductase type 2 family. In terms of assembly, homodimer. It depends on FAD as a cofactor.

The enzyme catalyses 2 reduced [2Fe-2S]-[ferredoxin] + NADP(+) + H(+) = 2 oxidized [2Fe-2S]-[ferredoxin] + NADPH. The protein is Ferredoxin--NADP reductase of Salinispora arenicola (strain CNS-205).